The primary structure comprises 475 residues: Putative aldehyde dehydrogenase SSP0762 (475 aa).

NAD(+) is bound at residue 201–207; sequence GDGQGVG. Active-site residues include E245 and C279.

It belongs to the aldehyde dehydrogenase family.

The enzyme catalyses an aldehyde + NAD(+) + H2O = a carboxylate + NADH + 2 H(+). This is Putative aldehyde dehydrogenase SSP0762 from Staphylococcus saprophyticus subsp. saprophyticus (strain ATCC 15305 / DSM 20229 / NCIMB 8711 / NCTC 7292 / S-41).